Reading from the N-terminus, the 654-residue chain is MLDRVGPGFQDLCRQVLPTLPTLSQEEVSTIWANVSDFVERQLTMHKGVQISGLGTFTFSRQQLEVGNKKFVLVQRPVFIMAEKLVQTHGLKQNKVFSPGDIPVVPLNFVMISLEGPFNRDTIEGCVKETLLFLSRSISVKQKVEFTFKGIGVLSIRDSKVKMRFYKDFLCSMDGSGILTKALANRPGTMDSVLSSRESYRKRPNSAMAFPRIEHKETENKTPVEVVGEEGGENRPRKIKLKDQSDKEGGAREISSPKKHRERQSISPAKVTSVSLLDKFERSGNGGKITACENLSSPGCQRNDNERPRTSPAPACQDHNKAGQEMCYVCLQRAQRNFALHYGDERRRREIEDERLMQQYQILKDQEAFFKNQVKGMAAREQNQKNAAYNLGVAEAIRNHKNEKPEFYKSFLFDKRPLSPEINAFKQEEYSQSLLKQMESKREKEIKQRQNRELMDRLEQVQLTEELAAQRAQYLKEKMEETQHYKRALDAQVKNKPPQLPMFEPDSAEPIFGKNDGEREMEKRKREQSCMKHQMEAAASHKRNTILNQLVDQRRDLQMLQRTQREHMADRAAEMDRVNRLNQCLQEDWDRSLAMKKQRDVEEKAFERASDKLFLLDQCEKYRRCRQCQRRTCNTGESNLWPMNKFLQGSRLLV.

Positions 196–270 (SRESYRKRPN…RERQSISPAK (75 aa)) are disordered. At serine 206 the chain carries Phosphoserine. Basic and acidic residues-rich tracts occupy residues 212–222 (RIEHKETENKT) and 232–251 (GENR…EGGA). A phosphoserine mark is found at serine 273, serine 275, serine 296, and serine 419. A compositionally biased stretch (polar residues) spans 293–302 (ENLSSPGCQR). The interval 293 to 318 (ENLSSPGCQRNDNERPRTSPAPACQD) is disordered. Residues 431-562 (SQSLLKQMES…QRRDLQMLQR (132 aa)) adopt a coiled-coil conformation.

It localises to the cytoplasm. The protein resides in the cytoskeleton. Its subcellular location is the microtubule organizing center. The protein localises to the centrosome. This chain is Coiled-coil domain-containing protein 81 (Ccdc81), found in Mus musculus (Mouse).